The primary structure comprises 474 residues: tRNA-2-methylthio-N(6)-dimethylallyladenosine synthase (474 aa).

The region spanning 3–120 (KKLYIKTFGC…LPQMISTRQI (118 aa)) is the MTTase N-terminal domain. [4Fe-4S] cluster contacts are provided by Cys-12, Cys-49, Cys-83, Cys-157, Cys-161, and Cys-164. In terms of domain architecture, Radical SAM core spans 143 to 382 (RTEGVTAFVS…ELQAQAISVR (240 aa)). One can recognise a TRAM domain in the interval 381–444 (VRMVGTTQRV…SHTLRGENVR (64 aa)).

Belongs to the methylthiotransferase family. MiaB subfamily. In terms of assembly, monomer. It depends on [4Fe-4S] cluster as a cofactor.

It localises to the cytoplasm. The enzyme catalyses N(6)-dimethylallyladenosine(37) in tRNA + (sulfur carrier)-SH + AH2 + 2 S-adenosyl-L-methionine = 2-methylsulfanyl-N(6)-dimethylallyladenosine(37) in tRNA + (sulfur carrier)-H + 5'-deoxyadenosine + L-methionine + A + S-adenosyl-L-homocysteine + 2 H(+). Catalyzes the methylthiolation of N6-(dimethylallyl)adenosine (i(6)A), leading to the formation of 2-methylthio-N6-(dimethylallyl)adenosine (ms(2)i(6)A) at position 37 in tRNAs that read codons beginning with uridine. The polypeptide is tRNA-2-methylthio-N(6)-dimethylallyladenosine synthase (Nitrosospira multiformis (strain ATCC 25196 / NCIMB 11849 / C 71)).